A 158-amino-acid chain; its full sequence is Nucleoside diphosphate kinase (158 aa).

ATP is bound by residues K16, F64, R92, T98, R109, and N119. H122 functions as the Pros-phosphohistidine intermediate in the catalytic mechanism.

It belongs to the NDK family. The cofactor is Mg(2+).

It localises to the cytoplasm. It carries out the reaction a 2'-deoxyribonucleoside 5'-diphosphate + ATP = a 2'-deoxyribonucleoside 5'-triphosphate + ADP. It catalyses the reaction a ribonucleoside 5'-diphosphate + ATP = a ribonucleoside 5'-triphosphate + ADP. Functionally, major role in the synthesis of nucleoside triphosphates other than ATP. The ATP gamma phosphate is transferred to the NDP beta phosphate via a ping-pong mechanism, using a phosphorylated active-site intermediate. This Haloquadratum walsbyi (strain DSM 16790 / HBSQ001) protein is Nucleoside diphosphate kinase.